The sequence spans 260 residues: NH(3)-dependent NAD(+) synthetase (260 aa).

31–38 (GLSGGLDS) contributes to the ATP binding site. Asp-37 is a binding site for Mg(2+). Arg-112 is a binding site for deamido-NAD(+). Thr-132 lines the ATP pocket. Residue Glu-137 coordinates Mg(2+). 2 residues coordinate ATP: Lys-161 and Ser-183.

It belongs to the NAD synthetase family. As to quaternary structure, homodimer.

It catalyses the reaction deamido-NAD(+) + NH4(+) + ATP = AMP + diphosphate + NAD(+) + H(+). It functions in the pathway cofactor biosynthesis; NAD(+) biosynthesis; NAD(+) from deamido-NAD(+) (ammonia route): step 1/1. Catalyzes the ATP-dependent amidation of deamido-NAD to form NAD. Uses ammonia as a nitrogen source. This chain is NH(3)-dependent NAD(+) synthetase, found in Helicobacter acinonychis (strain Sheeba).